A 254-amino-acid chain; its full sequence is 5-oxoprolinase subunit A (254 aa).

This sequence belongs to the LamB/PxpA family. In terms of assembly, forms a complex composed of PxpA, PxpB and PxpC.

The catalysed reaction is 5-oxo-L-proline + ATP + 2 H2O = L-glutamate + ADP + phosphate + H(+). Catalyzes the cleavage of 5-oxoproline to form L-glutamate coupled to the hydrolysis of ATP to ADP and inorganic phosphate. In Heliobacterium modesticaldum (strain ATCC 51547 / Ice1), this protein is 5-oxoprolinase subunit A.